The following is a 202-amino-acid chain: Large ribosomal subunit protein bL17 (202 aa).

Residues 148-202 (DEAPAAESTDAAQVEAGGVEQPDTLPDADAPATADEGVEVDAAEVDPSDEKKDQA) are disordered. A compositionally biased stretch (low complexity) spans 169–182 (PDTLPDADAPATAD). Residues 183 to 194 (EGVEVDAAEVDP) show a composition bias toward acidic residues.

It belongs to the bacterial ribosomal protein bL17 family. As to quaternary structure, part of the 50S ribosomal subunit. Contacts protein L32.

This chain is Large ribosomal subunit protein bL17, found in Kineococcus radiotolerans (strain ATCC BAA-149 / DSM 14245 / SRS30216).